We begin with the raw amino-acid sequence, 312 residues long: Olfactory receptor-like protein COR2 (312 aa).

Over Met1 to Pro26 the chain is Extracellular. N-linked (GlcNAc...) asparagine glycosylation is present at Asn5. A helical transmembrane segment spans residues Leu27 to Ile49. The Cytoplasmic segment spans residues Gly50–Thr57. A helical membrane pass occupies residues Pro58–Pro79. The Extracellular portion of the chain corresponds to Lys80–Gln100. The cysteines at positions 97 and 179 are disulfide-linked. A helical transmembrane segment spans residues Tyr101–Tyr120. The Cytoplasmic portion of the chain corresponds to Asp121–Ala139. A helical transmembrane segment spans residues Val140 to Leu164. Topologically, residues Lys165–Leu205 are extracellular. Residues Phe206–Val226 traverse the membrane as a helical segment. The Cytoplasmic segment spans residues Met227–Ser239. A helical transmembrane segment spans residues Thr240–Leu260. Residues Arg261–Asp271 are Extracellular-facing. The helical transmembrane segment at Lys272–Trp292 threads the bilayer. The Cytoplasmic portion of the chain corresponds to Arg293 to His312.

The protein belongs to the G-protein coupled receptor 1 family.

The protein localises to the cell membrane. Its function is as follows. Odorant receptor. The sequence is that of Olfactory receptor-like protein COR2 (COR2) from Gallus gallus (Chicken).